The primary structure comprises 211 residues: Cytochrome c biogenesis ATP-binding export protein CcmA (211 aa).

Positions 1 to 211 constitute an ABC transporter domain; that stretch reads MAIHNLACVR…RMAEATSCFG (211 aa). An ATP-binding site is contributed by 33-40; it reads GSNGAGKT.

This sequence belongs to the ABC transporter superfamily. CcmA exporter (TC 3.A.1.107) family. As to quaternary structure, the complex is composed of two ATP-binding proteins (CcmA) and two transmembrane proteins (CcmB).

It is found in the cell inner membrane. The enzyme catalyses heme b(in) + ATP + H2O = heme b(out) + ADP + phosphate + H(+). Functionally, part of the ABC transporter complex CcmAB involved in the biogenesis of c-type cytochromes; once thought to export heme, this seems not to be the case, but its exact role is uncertain. Responsible for energy coupling to the transport system. The sequence is that of Cytochrome c biogenesis ATP-binding export protein CcmA from Sodalis glossinidius (strain morsitans).